Reading from the N-terminus, the 598-residue chain is (+)-bornyl diphosphate synthase, chloroplastic (598 aa).

A chloroplast-targeting transit peptide spans 1–54; the sequence is MSIISMNVSILSKPLNCLHNLERRPSKALLVPCTAPTARLRASCSSKLQEAHQI. Substrate is bound at residue Arg-314. Mg(2+) is bound by residues Asp-351 and Asp-355. A DDXXD motif motif is present at residues 351–355; sequence DDIYD. A substrate-binding site is contributed by Arg-493. Mg(2+) contacts are provided by Asp-496, Thr-500, and Glu-504. Residue Thr-500 coordinates substrate. Lys-512 serves as a coordination point for substrate.

The protein belongs to the terpene synthase family. As to quaternary structure, homodimer. It depends on Mg(2+) as a cofactor.

It is found in the plastid. Its subcellular location is the chloroplast. The catalysed reaction is (2E)-geranyl diphosphate = (2S,4R)-bornyl diphosphate. It carries out the reaction (2E)-geranyl diphosphate = (1R,4S)-camphene + diphosphate. The enzyme catalyses (2E)-geranyl diphosphate = (1R,5R)-alpha-pinene + diphosphate. Its pathway is terpene metabolism; (R)-camphor biosynthesis. Catalyzes the formation of the (+)-camphor precursor (+)-bornyl diphosphate from geranyl diphosphate. The enzyme also produces significant amounts of (+)-alpha-pinene, (+)-camphene, and (+-)-limonene. This Salvia officinalis (Sage) protein is (+)-bornyl diphosphate synthase, chloroplastic.